We begin with the raw amino-acid sequence, 472 residues long: Sad1-interacting factor 3 (472 aa).

Disordered regions lie at residues 1–47 and 197–223; these read MSTK…PRFG and SSGPAPDDMPSSASNHNQKHLDSDKPD. At 1–443 the chain is on the lumenal side; sequence MSTKDKLNLP…KSSADRKMNS (443 aa). The span at 30–40 shows a compositional bias: polar residues; that stretch reads NSESTRITPQH. Ser-42 bears the Phosphoserine mark. Residues 444–464 traverse the membrane as a helical segment; sequence ITWIIIILISLFVIIFTLEVI. Residues 465-472 are Cytoplasmic-facing; the sequence is LRLRWAHR.

This sequence belongs to the RMD1/sif2 family. In terms of assembly, interacts with sad1.

The protein localises to the nucleus membrane. This chain is Sad1-interacting factor 3 (sif3), found in Schizosaccharomyces pombe (strain 972 / ATCC 24843) (Fission yeast).